A 598-amino-acid polypeptide reads, in one-letter code: Auxin response factor 22 (598 aa).

A DNA-binding region (TF-B3) is located at residues 124–226 (NSFTKVLTAS…ELRVGIRRAG (103 aa)). One can recognise a PB1 domain in the interval 509-590 (RTCTKVQMQG…MVKKILIFKR (82 aa)).

This sequence belongs to the ARF family. In terms of assembly, homodimers and heterodimers.

The protein resides in the nucleus. In terms of biological role, auxin response factors (ARFs) are transcriptional factors that bind specifically to the DNA sequence 5'-TGTCTC-3' found in the auxin-responsive promoter elements (AuxREs). Could act as transcriptional activator or repressor. Formation of heterodimers with Aux/IAA proteins may alter their ability to modulate early auxin response genes expression. This is Auxin response factor 22 (ARF22) from Arabidopsis thaliana (Mouse-ear cress).